The chain runs to 975 residues: E3 ubiquitin-protein ligase BRE1A (975 aa).

The segment at 1–37 (MSGIGSKRAAGEPGTSVPPEKKTAVEDSGTTVETIKL) is disordered. Residue Lys21 is modified to N6-acetyllysine. Phosphoserine is present on Ser41. Positions 43–90 (TEELDIRTLQTKNRKLAEMLDQRQAIEDELREHIEKLERRQATDDASL) form a coiled coil. The tract at residues 125–155 (KALVVPEPEPDSDSNQERKDDRERGEGQEPA) is disordered. Ser136 and Ser138 each carry phosphoserine. The segment covering 139–151 (NQERKDDRERGEG) has biased composition (basic and acidic residues). Coiled coils occupy residues 168–375 (EEME…EEVV) and 429–898 (SLHK…TTKK). N6-acetyllysine occurs at positions 348 and 510. Positions 507 to 622 (DLNKTRLRSG…GKHDDGRKKE (116 aa)) are disordered. Position 522 is a phosphoserine (Ser522). The span at 527-540 (EDPKDEPAELKQDS) shows a compositional bias: basic and acidic residues. The span at 543–552 (LATQSAASKA) shows a compositional bias: polar residues. Positions 558-622 (NEIKSKRDEE…GKHDDGRKKE (65 aa)) are enriched in basic and acidic residues. The residue at position 562 (Ser562) is a Phosphoserine. An RING-type zinc finger spans residues 922 to 961 (CPCCNMRKKDAVLTKCFHVFCFECVKTRYDTRQRKCPKCN).

The protein belongs to the BRE1 family. Component of the RNF20/40 complex (also known as BRE1 complex) probably composed of 2 copies of RNF20/BRE1A and 2 copies of RNF40/BRE1B. Interacts with UBE2E1/UBCH6. Interacts with p53/TP53 and WAC. Interacts with PAF1; the interaction mediates the association of the PAF1 and RNF20/40 complexes which is a prerequsite for recruitment of UBE2A/B. Interacts with PA2G4. Interacts with FBXL19.

It is found in the nucleus. It carries out the reaction S-ubiquitinyl-[E2 ubiquitin-conjugating enzyme]-L-cysteine + [acceptor protein]-L-lysine = [E2 ubiquitin-conjugating enzyme]-L-cysteine + N(6)-ubiquitinyl-[acceptor protein]-L-lysine.. Its pathway is protein modification; protein ubiquitination. Component of the RNF20/40 E3 ubiquitin-protein ligase complex that mediates monoubiquitination of 'Lys-120' of histone H2B (H2BK120ub1). H2BK120ub1 gives a specific tag for epigenetic transcriptional activation and is also prerequisite for histone H3 'Lys-4' and 'Lys-79' methylation (H3K4me and H3K79me, respectively). It thereby plays a central role in histone code and gene regulation. The RNF20/40 complex forms a H2B ubiquitin ligase complex in cooperation with the E2 enzyme UBE2A or UBE2B; reports about the cooperation with UBE2E1/UBCH are contradictory. Required for transcriptional activation of Hox genes. Recruited to the MDM2 promoter, probably by being recruited by p53/TP53, and thereby acts as a transcriptional coactivator. Mediates the polyubiquitination of PA2G4 leading to its proteasome-mediated degradation. This is E3 ubiquitin-protein ligase BRE1A (RNF20) from Bos taurus (Bovine).